Here is a 118-residue protein sequence, read N- to C-terminus: UPF0102 protein CHY_1414 (118 aa).

Belongs to the UPF0102 family.

The sequence is that of UPF0102 protein CHY_1414 from Carboxydothermus hydrogenoformans (strain ATCC BAA-161 / DSM 6008 / Z-2901).